The primary structure comprises 343 residues: Methionine import ATP-binding protein MetN 1 (343 aa).

Residues Ile-2 to Ile-241 form the ABC transporter domain. Gly-38–Ser-45 is a binding site for ATP.

The protein belongs to the ABC transporter superfamily. Methionine importer (TC 3.A.1.24) family. In terms of assembly, the complex is composed of two ATP-binding proteins (MetN), two transmembrane proteins (MetI) and a solute-binding protein (MetQ).

It localises to the cell inner membrane. The enzyme catalyses L-methionine(out) + ATP + H2O = L-methionine(in) + ADP + phosphate + H(+). It carries out the reaction D-methionine(out) + ATP + H2O = D-methionine(in) + ADP + phosphate + H(+). Part of the ABC transporter complex MetNIQ involved in methionine import. Responsible for energy coupling to the transport system. The polypeptide is Methionine import ATP-binding protein MetN 1 (Salmonella typhi).